The following is a 427-amino-acid chain: Glucose-1-phosphate adenylyltransferase (427 aa).

The AMP site is built by Arg40, His46, and Arg52. Residue Tyr114 coordinates alpha-D-glucose 1-phosphate. Residue Arg130 participates in AMP binding. Alpha-D-glucose 1-phosphate is bound by residues Gly179, 194 to 195 (EK), and Ser212. Arg386 is an AMP binding site.

The protein belongs to the bacterial/plant glucose-1-phosphate adenylyltransferase family. In terms of assembly, homotetramer.

It catalyses the reaction alpha-D-glucose 1-phosphate + ATP + H(+) = ADP-alpha-D-glucose + diphosphate. The protein operates within glycan biosynthesis; glycogen biosynthesis. Allosterically activated by fructose-1,6-bisphosphate (F16BP) and inhibited by AMP. Its function is as follows. Involved in the biosynthesis of ADP-glucose, a building block required for the elongation reactions to produce glycogen. Catalyzes the reaction between ATP and alpha-D-glucose 1-phosphate (G1P) to produce pyrophosphate and ADP-Glc. The protein is Glucose-1-phosphate adenylyltransferase of Cronobacter sakazakii (strain ATCC BAA-894) (Enterobacter sakazakii).